The chain runs to 148 residues: 3-hydroxyacyl-[acyl-carrier-protein] dehydratase FabZ (148 aa).

Residue His47 is part of the active site.

It belongs to the thioester dehydratase family. FabZ subfamily.

It is found in the cytoplasm. The catalysed reaction is a (3R)-hydroxyacyl-[ACP] = a (2E)-enoyl-[ACP] + H2O. Involved in unsaturated fatty acids biosynthesis. Catalyzes the dehydration of short chain beta-hydroxyacyl-ACPs and long chain saturated and unsaturated beta-hydroxyacyl-ACPs. The polypeptide is 3-hydroxyacyl-[acyl-carrier-protein] dehydratase FabZ (Hydrogenobaculum sp. (strain Y04AAS1)).